Reading from the N-terminus, the 378-residue chain is Queuine tRNA-ribosyltransferase (378 aa).

The active-site Proton acceptor is Asp89. Substrate-binding positions include 89–93, Asp143, Gln187, and Gly214; that span reads DSGGF. An RNA binding region spans residues 245–251; the sequence is GVGKPQD. Residue Asp264 is the Nucleophile of the active site. The segment at 269-273 is RNA binding; important for wobble base 34 recognition; sequence TRNAR. Zn(2+) is bound by residues Cys302, Cys304, Cys307, and His334.

The protein belongs to the queuine tRNA-ribosyltransferase family. In terms of assembly, homodimer. Within each dimer, one monomer is responsible for RNA recognition and catalysis, while the other monomer binds to the replacement base PreQ1. Requires Zn(2+) as cofactor.

It carries out the reaction 7-aminomethyl-7-carbaguanine + guanosine(34) in tRNA = 7-aminomethyl-7-carbaguanosine(34) in tRNA + guanine. It participates in tRNA modification; tRNA-queuosine biosynthesis. In terms of biological role, catalyzes the base-exchange of a guanine (G) residue with the queuine precursor 7-aminomethyl-7-deazaguanine (PreQ1) at position 34 (anticodon wobble position) in tRNAs with GU(N) anticodons (tRNA-Asp, -Asn, -His and -Tyr). Catalysis occurs through a double-displacement mechanism. The nucleophile active site attacks the C1' of nucleotide 34 to detach the guanine base from the RNA, forming a covalent enzyme-RNA intermediate. The proton acceptor active site deprotonates the incoming PreQ1, allowing a nucleophilic attack on the C1' of the ribose to form the product. After dissociation, two additional enzymatic reactions on the tRNA convert PreQ1 to queuine (Q), resulting in the hypermodified nucleoside queuosine (7-(((4,5-cis-dihydroxy-2-cyclopenten-1-yl)amino)methyl)-7-deazaguanosine). This Blochmanniella floridana protein is Queuine tRNA-ribosyltransferase.